Reading from the N-terminus, the 198-residue chain is Outer-membrane lipoprotein carrier protein (198 aa).

Positions 1–17 (MKKILLSLCFLSSVAFA) are cleaved as a signal peptide.

Belongs to the LolA family. In terms of assembly, monomer.

The protein resides in the periplasm. Participates in the translocation of lipoproteins from the inner membrane to the outer membrane. Only forms a complex with a lipoprotein if the residue after the N-terminal Cys is not an aspartate (The Asp acts as a targeting signal to indicate that the lipoprotein should stay in the inner membrane). The polypeptide is Outer-membrane lipoprotein carrier protein (Aliivibrio salmonicida (strain LFI1238) (Vibrio salmonicida (strain LFI1238))).